We begin with the raw amino-acid sequence, 682 residues long: DNA ligase (682 aa).

Residues 43-47 (DSEYD), 92-93 (SL), and D123 each bind NAD(+). K125 acts as the N6-AMP-lysine intermediate in catalysis. Residues R146, E184, K302, and K326 each contribute to the NAD(+) site. Zn(2+) contacts are provided by C420, C423, C438, and C443. Residues 603–682 (TTKGFFTGKK…TFLQKLLIVL (80 aa)) form the BRCT domain.

This sequence belongs to the NAD-dependent DNA ligase family. LigA subfamily. It depends on Mg(2+) as a cofactor. Mn(2+) is required as a cofactor.

It carries out the reaction NAD(+) + (deoxyribonucleotide)n-3'-hydroxyl + 5'-phospho-(deoxyribonucleotide)m = (deoxyribonucleotide)n+m + AMP + beta-nicotinamide D-nucleotide.. DNA ligase that catalyzes the formation of phosphodiester linkages between 5'-phosphoryl and 3'-hydroxyl groups in double-stranded DNA using NAD as a coenzyme and as the energy source for the reaction. It is essential for DNA replication and repair of damaged DNA. The protein is DNA ligase of Lawsonia intracellularis (strain PHE/MN1-00).